A 119-amino-acid polypeptide reads, in one-letter code: NAD(P)H-quinone oxidoreductase subunit M (119 aa).

The protein belongs to the complex I NdhM subunit family. NDH-1 can be composed of about 15 different subunits; different subcomplexes with different compositions have been identified which probably have different functions.

Its subcellular location is the cellular thylakoid membrane. It catalyses the reaction a plastoquinone + NADH + (n+1) H(+)(in) = a plastoquinol + NAD(+) + n H(+)(out). It carries out the reaction a plastoquinone + NADPH + (n+1) H(+)(in) = a plastoquinol + NADP(+) + n H(+)(out). In terms of biological role, NDH-1 shuttles electrons from an unknown electron donor, via FMN and iron-sulfur (Fe-S) centers, to quinones in the respiratory and/or the photosynthetic chain. The immediate electron acceptor for the enzyme in this species is believed to be plastoquinone. Couples the redox reaction to proton translocation, and thus conserves the redox energy in a proton gradient. Cyanobacterial NDH-1 also plays a role in inorganic carbon-concentration. The polypeptide is NAD(P)H-quinone oxidoreductase subunit M (Crocosphaera subtropica (strain ATCC 51142 / BH68) (Cyanothece sp. (strain ATCC 51142))).